Reading from the N-terminus, the 337-residue chain is Putative 4-hydroxythreonine-4-phosphate dehydrogenase (337 aa).

Positions 172, 216, and 271 each coordinate a divalent metal cation.

Belongs to the PdxA family. In terms of assembly, homodimer. The cofactor is Zn(2+). It depends on Mg(2+) as a cofactor. Co(2+) serves as cofactor.

Its subcellular location is the cytoplasm. The catalysed reaction is 4-(phosphooxy)-L-threonine + NAD(+) = 3-amino-2-oxopropyl phosphate + CO2 + NADH. Its pathway is cofactor biosynthesis; pyridoxine 5'-phosphate biosynthesis; pyridoxine 5'-phosphate from D-erythrose 4-phosphate: step 4/5. Catalyzes the NAD(P)-dependent oxidation of 4-(phosphooxy)-L-threonine (HTP) into 2-amino-3-oxo-4-(phosphooxy)butyric acid which spontaneously decarboxylates to form 3-amino-2-oxopropyl phosphate (AHAP). The chain is Putative 4-hydroxythreonine-4-phosphate dehydrogenase from Pasteurella multocida (strain Pm70).